Consider the following 161-residue polypeptide: Small ribosomal subunit protein bS16 (161 aa).

The tract at residues 114 to 161 is disordered; it reads EGGPTTEATKPKKKSPAKKAKGGEGDADAAAEKVEASAEGEQTESAES. Residues 124–133 are compositionally biased toward basic residues; that stretch reads PKKKSPAKKA.

It belongs to the bacterial ribosomal protein bS16 family.

This is Small ribosomal subunit protein bS16 from Mycobacterium marinum (strain ATCC BAA-535 / M).